The primary structure comprises 80 residues: Myocilin opposite strand protein (80 aa).

Residues 53–80 form a disordered region; the sequence is EQAPPPHRTYLTVPPAPPPSPAEDPTVS.

In Homo sapiens (Human), this protein is Myocilin opposite strand protein.